The sequence spans 417 residues: Serine--tRNA ligase (417 aa).

Residue 232 to 234 (TAE) participates in L-serine binding. 263–265 (RKE) lines the ATP pocket. Glu-286 serves as a coordination point for L-serine. 350–353 (EISS) provides a ligand contact to ATP. Position 385 (Ser-385) interacts with L-serine.

The protein belongs to the class-II aminoacyl-tRNA synthetase family. Type-1 seryl-tRNA synthetase subfamily. As to quaternary structure, homodimer. The tRNA molecule binds across the dimer.

Its subcellular location is the cytoplasm. The enzyme catalyses tRNA(Ser) + L-serine + ATP = L-seryl-tRNA(Ser) + AMP + diphosphate + H(+). It catalyses the reaction tRNA(Sec) + L-serine + ATP = L-seryl-tRNA(Sec) + AMP + diphosphate + H(+). Its pathway is aminoacyl-tRNA biosynthesis; selenocysteinyl-tRNA(Sec) biosynthesis; L-seryl-tRNA(Sec) from L-serine and tRNA(Sec): step 1/1. In terms of biological role, catalyzes the attachment of serine to tRNA(Ser). Is also able to aminoacylate tRNA(Sec) with serine, to form the misacylated tRNA L-seryl-tRNA(Sec), which will be further converted into selenocysteinyl-tRNA(Sec). The protein is Serine--tRNA ligase of Sulfurihydrogenibium sp. (strain YO3AOP1).